Consider the following 114-residue polypeptide: Progonadoliberin-2 (114 aa).

A signal peptide spans Met-1–Ala-25. The interval Pro-22–Gly-80 is disordered. A Glycine amide modification is found at Gly-35.

Belongs to the GnRH family. In terms of tissue distribution, midbrain.

It is found in the secreted. Functionally, stimulates the secretion of gonadotropins; it stimulates the secretion of both luteinizing and follicle-stimulating hormones. The protein is Progonadoliberin-2 (GNRH2) of Tupaia belangeri (Common tree shrew).